Consider the following 419-residue polypeptide: Putative competence-damage inducible protein (419 aa).

This sequence belongs to the CinA family.

The protein is Putative competence-damage inducible protein of Streptococcus agalactiae serotype III (strain NEM316).